A 164-amino-acid polypeptide reads, in one-letter code: Cyanate hydratase (164 aa).

Residues Arg-90, Glu-93, and Ser-116 contribute to the active site.

It belongs to the cyanase family.

It carries out the reaction cyanate + hydrogencarbonate + 3 H(+) = NH4(+) + 2 CO2. In terms of biological role, catalyzes the reaction of cyanate with bicarbonate to produce ammonia and carbon dioxide. This is Cyanate hydratase from Ricinus communis (Castor bean).